The following is a 214-amino-acid chain: Ribosomal RNA small subunit methyltransferase G (214 aa).

Residues Gly81, Met86, 132–133 (VE), and Arg147 contribute to the S-adenosyl-L-methionine site.

This sequence belongs to the methyltransferase superfamily. RNA methyltransferase RsmG family.

Its subcellular location is the cytoplasm. The enzyme catalyses guanosine(527) in 16S rRNA + S-adenosyl-L-methionine = N(7)-methylguanosine(527) in 16S rRNA + S-adenosyl-L-homocysteine. In terms of biological role, specifically methylates the N7 position of guanine in position 527 of 16S rRNA. The protein is Ribosomal RNA small subunit methyltransferase G of Pseudomonas paraeruginosa (strain DSM 24068 / PA7) (Pseudomonas aeruginosa (strain PA7)).